The primary structure comprises 327 residues: Beta-ketoacyl-[acyl-carrier-protein] synthase III 2 (327 aa).

Residues cysteine 114 and histidine 251 contribute to the active site. The segment at serine 252–arginine 256 is ACP-binding. Asparagine 281 is a catalytic residue.

The protein belongs to the thiolase-like superfamily. FabH family. As to quaternary structure, homodimer.

It is found in the cytoplasm. The enzyme catalyses malonyl-[ACP] + acetyl-CoA + H(+) = 3-oxobutanoyl-[ACP] + CO2 + CoA. It functions in the pathway lipid metabolism; fatty acid biosynthesis. Functionally, catalyzes the condensation reaction of fatty acid synthesis by the addition to an acyl acceptor of two carbons from malonyl-ACP. Catalyzes the first condensation reaction which initiates fatty acid synthesis and may therefore play a role in governing the total rate of fatty acid production. Possesses both acetoacetyl-ACP synthase and acetyl transacylase activities. Its substrate specificity determines the biosynthesis of branched-chain and/or straight-chain of fatty acids. This is Beta-ketoacyl-[acyl-carrier-protein] synthase III 2 from Bacillus anthracis.